The primary structure comprises 146 residues: UPF0260 protein SO_2573 (146 aa).

This sequence belongs to the UPF0260 family.

The protein is UPF0260 protein SO_2573 of Shewanella oneidensis (strain ATCC 700550 / JCM 31522 / CIP 106686 / LMG 19005 / NCIMB 14063 / MR-1).